We begin with the raw amino-acid sequence, 112 residues long: Protein ORF3 (112 aa).

2 hydrophobic regions span residues Ala-7 to Pro-23 and Ala-40 to Ile-60. Residues Val-28 to His-66 are interaction with host HPX. The tract at residues Gln-70–Arg-112 is homodimerization, and interaction with host AMBP/bikunin. The tract at residues Leu-89–Arg-112 is disordered. Positions Ser-93 to Val-102 are interaction with host SRC, HCK, FYN, PIK3R3 and GRB2. A PTAP/PSAP motif motif is present at residues Pro-94–Pro-97.

It belongs to the hepevirus ORF3 protein family. As to quaternary structure, forms homooligomers. Interacts with host SRC, HCK, FYN, PIK3R3 and GRB2 (via SH3 domain); binding does not activate the kinases. Interacts with host AMBP/bikunin and AMBP/alpha-1-microglobulin peptides. Interacts with host HPX/hemopexin. Interacts (when phosphorylated) with capsid protein ORF2. Interacts with host TSG101; this interaction plays a role in viral release from the host cell. Interacts with host SIRPA; this interaction down-regulates the phosphorylation of host IRF3. Palmitoylated in the N-terminus.

The protein resides in the host endoplasmic reticulum membrane. It is found in the host cytoplasm. It localises to the host cytoskeleton. Its subcellular location is the virion. The protein localises to the host cell membrane. Functionally, small multifunctional phosphoprotein involved in virion morphogenesis, egress and counteracting host innate immunity. Plays critical roles in the final steps of viral release by interacting with host TSG101, a member of the vacuolar protein-sorting pathway and using other cellular host proteins involved in vesicle formation pathway. Also acts as a viroporin and forms ion conductive pores allowing viral particle release. Impairs the generation of type I interferon by down-regulating host TLR3 and TLR7 as well as their downstream signaling pathways. Down-regulates the phosphorylation of host IRF3 via the interaction with host SIRP-alpha, thereby inhibiting IFN-I expression. Interacts with host microtubules. This chain is Protein ORF3, found in Bandicota bengalensis (lesser bandicoot rat).